A 344-amino-acid polypeptide reads, in one-letter code: Glycerol-3-phosphate dehydrogenase [NAD(P)+] (344 aa).

Residues S11, W12, H32, R33, and K105 each coordinate NADPH. Sn-glycerol 3-phosphate is bound by residues K105, G135, and S137. A139 serves as a coordination point for NADPH. Sn-glycerol 3-phosphate contacts are provided by K190, D243, S253, R254, and N255. K190 acts as the Proton acceptor in catalysis. Position 254 (R254) interacts with NADPH. Residues V278 and E280 each contribute to the NADPH site.

It belongs to the NAD-dependent glycerol-3-phosphate dehydrogenase family.

It is found in the cytoplasm. It catalyses the reaction sn-glycerol 3-phosphate + NAD(+) = dihydroxyacetone phosphate + NADH + H(+). It carries out the reaction sn-glycerol 3-phosphate + NADP(+) = dihydroxyacetone phosphate + NADPH + H(+). It functions in the pathway membrane lipid metabolism; glycerophospholipid metabolism. Functionally, catalyzes the reduction of the glycolytic intermediate dihydroxyacetone phosphate (DHAP) to sn-glycerol 3-phosphate (G3P), the key precursor for phospholipid synthesis. The polypeptide is Glycerol-3-phosphate dehydrogenase [NAD(P)+] (Oceanobacillus iheyensis (strain DSM 14371 / CIP 107618 / JCM 11309 / KCTC 3954 / HTE831)).